The primary structure comprises 251 residues: tRNA-cytidine(32) 2-sulfurtransferase 2 (251 aa).

The PP-loop motif motif lies at S33–S38. Positions 108, 111, and 199 each coordinate [4Fe-4S] cluster.

The protein belongs to the TtcA family. As to quaternary structure, homodimer. Requires Mg(2+) as cofactor. [4Fe-4S] cluster serves as cofactor.

It localises to the cytoplasm. The catalysed reaction is cytidine(32) in tRNA + S-sulfanyl-L-cysteinyl-[cysteine desulfurase] + AH2 + ATP = 2-thiocytidine(32) in tRNA + L-cysteinyl-[cysteine desulfurase] + A + AMP + diphosphate + H(+). The protein operates within tRNA modification. Catalyzes the ATP-dependent 2-thiolation of cytidine in position 32 of tRNA, to form 2-thiocytidine (s(2)C32). The sulfur atoms are provided by the cysteine/cysteine desulfurase (IscS) system. The sequence is that of tRNA-cytidine(32) 2-sulfurtransferase 2 from Francisella tularensis subsp. tularensis (strain FSC 198).